The primary structure comprises 894 residues: E3 ubiquitin-protein ligase SH3RF1 (894 aa).

The RING-type zinc finger occupies 12–53 (CPVCLERLDASAKVLPCQHTFCKRCLLGIVGSRNELRCPECR). 2 consecutive SH3 domains span residues 134-193 (PQLP…IIKP) and 196-259 (QPPP…FNSA). A disordered region spans residues 274–323 (VDTAECPSATAAQSSSASKHSDTKKNTRKRHSFTSLTMANKSSQASQNRH). Positions 281-291 (SATAAQSSSAS) are enriched in low complexity. Positions 293–363 (HSDTKKNTRK…APSQVHISTT (71 aa)) are interaction with RAC1. Position 305 is a phosphoserine (serine 305). Over residues 306-322 (FTSLTMANKSSQASQNR) the composition is skewed to polar residues. Positions 448-551 (HLRPQTRPSV…STAGGPAQKP (104 aa)) are interaction with AKT2. Residues 453-514 (TRPSVYVAIY…PGNYVAPVTR (62 aa)) form the SH3 3 domain. Disordered stretches follow at residues 526–556 (MSTAGQASRGVTMVSPSTAGGPAQKPQGNGV) and 682–751 (LETE…PTLD). The residue at position 540 (serine 540) is a Phosphoserine. The segment covering 700 to 713 (SPESAASACGNSSA) has biased composition (polar residues). A compositionally biased stretch (basic and acidic residues) spans 715–726 (KPDKDSKKEKKG). The residue at position 743 (serine 743) is a Phosphoserine. An SH3 4 domain is found at 835–894 (VVCERHRVVVSYPPQSEAELELKEGDIVFVHKKREDGWFKGTLQRNGKTGLFPGSFVENI).

It belongs to the SH3RF family. Interacts with HERP1. Interacts with RAC1; in a GTP-dependent manner. Interacts with MAP3K10/MLK2 and MAP3K11/MLK3. Interacts with MAPK8IP; this interaction leads to the PJAC complex (POSH-JIP or SH3RF1/MAPK8IP apoptotic complex) with a 1:1 ratio. Interacts with SIAH1. Probably part of a signaling complex that may contain SH3RF1, MAPK8IP, DLK1, MAP2K4/MKK4, MAP2K7/MKK7, MAPK8/JNK1, MAPK9/JNK2, AKT1 and AKT2. Found in a complex with RAC2, MAP3K7/TAK1, MAP2K7/MKK7, MAPK8IP1/JIP1, MAPK8/JNK1 and MAPK9/JNK2. Found in a complex with RAC1, MAP3K11/MLK3, MAP2K7/MKK7, MAPK8IP1/JIP1 and MAPK8/JNK1. Interacts with SH3RF2. Phosphorylated at Ser-305 by AKT1 and AKT2. When phosphorylated, it has reduced ability to bind Rac. In terms of processing, autoubiquitinated. Ubiquitinated by SH3RF2, leading to proteasome-mediated degradation.

It is found in the cytoplasm. Its subcellular location is the perinuclear region. It localises to the cell projection. The protein localises to the lamellipodium. The protein resides in the golgi apparatus. It is found in the trans-Golgi network. The enzyme catalyses S-ubiquitinyl-[E2 ubiquitin-conjugating enzyme]-L-cysteine + [acceptor protein]-L-lysine = [E2 ubiquitin-conjugating enzyme]-L-cysteine + N(6)-ubiquitinyl-[acceptor protein]-L-lysine.. Its pathway is protein modification; protein ubiquitination. Its function is as follows. Has E3 ubiquitin-protein ligase activity. In the absence of an external substrate, it can catalyze self-ubiquitination. Stimulates ubiquitination of potassium channel KCNJ1, enhancing it's dynamin-dependent and clathrin-independent endocytosis. Acts as a scaffold protein that coordinates with MAPK8IP1/JIP1 in organizing different components of the JNK pathway, including RAC1 or RAC2, MAP3K11/MLK3 or MAP3K7/TAK1, MAP2K7/MKK7, MAPK8/JNK1 and/or MAPK9/JNK2 into a functional multiprotein complex to ensure the effective activation of the JNK signaling pathway. Regulates the differentiation of CD4(+) and CD8(+) T-cells and promotes T-helper 1 (Th1) cell differentiation. Regulates the activation of MAPK8/JNK1 and MAPK9/JNK2 in CD4(+) T-cells and the activation of MAPK8/JNK1 in CD8(+) T-cells. Plays a crucial role in the migration of neocortical neurons in the developing brain. Controls proper cortical neuronal migration and the formation of proximal cytoplasmic dilation in the leading process (PCDLP) in migratory neocortical neurons by regulating the proper localization of activated RAC1 and F-actin assembly. In Rattus norvegicus (Rat), this protein is E3 ubiquitin-protein ligase SH3RF1 (Sh3rf1).